Here is a 174-residue protein sequence, read N- to C-terminus: uncharacterized protein (174 aa).

The N-terminal stretch at 1-31 (MCCVYRMNRPASGLTVVFCGKLSGKPGPKSA) is a signal peptide. The interval 39 to 59 (KSGADDGGENPRFFSAGPRTE) is disordered.

This is an uncharacterized protein from Escherichia coli (strain K12).